Consider the following 420-residue polypeptide: Protein STB1 (420 aa).

Position 2 is an N-acetylserine (serine 2). Residues 2–70 form an interaction with SWI6 region; that stretch reads SQPQMSPEKE…DEDHKTLLEA (69 aa). Position 7 is a phosphoserine (serine 7). Disordered regions lie at residues 30–187 and 273–319; these read QLKL…SDNT and DSPS…ELNG. The segment covering 43 to 55 has biased composition (basic and acidic residues); it reads RKQDSTTKKRSGE. Serine 72 carries the post-translational modification Phosphoserine. Threonine 99 is subject to Phosphothreonine. At serine 102 the chain carries Phosphoserine. The span at 106–122 shows a compositional bias: basic and acidic residues; it reads RKAEDRSQQIKPRKEDT. Positions 156-169 are enriched in low complexity; that stretch reads NNNNSSNHSNNNNN. Polar residues predominate over residues 277–319; sequence LYLSNNNGSVQATLSPQQRRKPTTNTLHPPSNVPTTPSRELNG. At threonine 419 the chain carries Phosphothreonine.

As to quaternary structure, interacts with the ANK repeats of SWI6. The interaction with SWI6 is required for function. Interacts with SIN3. Post-translationally, phosphorylated by CDC28 in a cell cycle-dependent manner, inhibiting the interaction with SWI6.

It localises to the cytoplasm. Its subcellular location is the nucleus. In terms of biological role, involved in the regulation and timing of MBF-dependent transcription in late G1 of the cell cycle. This Saccharomyces cerevisiae (strain ATCC 204508 / S288c) (Baker's yeast) protein is Protein STB1 (STB1).